The primary structure comprises 499 residues: Endoglucanase (499 aa).

The first 29 residues, 1-29 (MKRSISIFITCLLITLLTMGGMLASPASA), serve as a signal peptide directing secretion. Residues His65, 69 to 70 (WY), Tyr96, and His131 each bind substrate. Glu169 functions as the Proton donor in the catalytic mechanism. Residue Tyr231 coordinates substrate. Glu257 acts as the Nucleophile in catalysis. Residues 263–264 (AS), Trp291, and 296–298 (KQE) each bind substrate. The CBM3 domain maps to 350–499 (QENGISVQYR…GKLIWGTEPN (150 aa)).

This sequence belongs to the glycosyl hydrolase 5 (cellulase A) family.

It catalyses the reaction Endohydrolysis of (1-&gt;4)-beta-D-glucosidic linkages in cellulose, lichenin and cereal beta-D-glucans.. The sequence is that of Endoglucanase (bglC) from Bacillus subtilis.